The chain runs to 267 residues: Putative F-box protein At1g61060 (267 aa).

Positions 15–63 (DYFDAIHVDLFTAKILSKLPVKSIAQCRCVSKLWSSQIRRPYYNMLFPI) constitute an F-box domain.

The protein is Putative F-box protein At1g61060 of Arabidopsis thaliana (Mouse-ear cress).